The primary structure comprises 363 residues: MRTVLIAGAFSLVVSLFGTPLYIRWLVRRGYGQFVRDDGPTSHHTKRGTPTMGGVVIILAALLAYGAAHLFTGALPTVSGLLVLLLMTGLGVVGFLDDFLKISNQRSLGLTAKAKLAGQGLVGIVFAVLALQFPAAGKDGTTPASTHISVLRDTPLDLAVFGAVGGTVLFVVWALIITSAVSNGVNLTDGLDGLATGATTMVLAAYVLICTFQSNQSCYSLTEVEARCYEVRDPRDLAVVAAAVMGACFGFLWWNASPAKIFMGDTGSLALGGALAGLAILSRTQILLVLLGGLFVLITLSVILQVGSFKLTGKRIFRMAPLQHHFELAGWGEVTIVIRFWIIAGLFVFLGLGVFYAEWVTGA.

A run of 10 helical transmembrane segments spans residues Thr-3–Ile-23, Val-55–Leu-75, Pro-76–Leu-96, Leu-116–Ala-136, Leu-158–Thr-178, Gly-190–Cys-210, Leu-237–Ser-257, Ile-261–Leu-281, Ile-286–Val-306, and Phe-340–Val-360.

Belongs to the glycosyltransferase 4 family. MraY subfamily. The cofactor is Mg(2+).

The protein resides in the cell membrane. It catalyses the reaction UDP-N-acetyl-alpha-D-muramoyl-L-alanyl-gamma-D-glutamyl-meso-2,6-diaminopimeloyl-D-alanyl-D-alanine + di-trans,octa-cis-undecaprenyl phosphate = di-trans,octa-cis-undecaprenyl diphospho-N-acetyl-alpha-D-muramoyl-L-alanyl-D-glutamyl-meso-2,6-diaminopimeloyl-D-alanyl-D-alanine + UMP. It functions in the pathway cell wall biogenesis; peptidoglycan biosynthesis. Functionally, catalyzes the initial step of the lipid cycle reactions in the biosynthesis of the cell wall peptidoglycan: transfers peptidoglycan precursor phospho-MurNAc-pentapeptide from UDP-MurNAc-pentapeptide onto the lipid carrier undecaprenyl phosphate, yielding undecaprenyl-pyrophosphoryl-MurNAc-pentapeptide, known as lipid I. This Kineococcus radiotolerans (strain ATCC BAA-149 / DSM 14245 / SRS30216) protein is Phospho-N-acetylmuramoyl-pentapeptide-transferase.